The primary structure comprises 122 residues: Ribosome-binding factor A (122 aa).

It belongs to the RbfA family. As to quaternary structure, monomer. Binds 30S ribosomal subunits, but not 50S ribosomal subunits or 70S ribosomes.

The protein resides in the cytoplasm. In terms of biological role, one of several proteins that assist in the late maturation steps of the functional core of the 30S ribosomal subunit. Associates with free 30S ribosomal subunits (but not with 30S subunits that are part of 70S ribosomes or polysomes). Required for efficient processing of 16S rRNA. May interact with the 5'-terminal helix region of 16S rRNA. The sequence is that of Ribosome-binding factor A from Syntrophomonas wolfei subsp. wolfei (strain DSM 2245B / Goettingen).